The following is a 157-amino-acid chain: Protein Smg (157 aa).

Belongs to the Smg family.

This chain is Protein Smg, found in Escherichia coli O7:K1 (strain IAI39 / ExPEC).